Here is a 494-residue protein sequence, read N- to C-terminus: Glutamyl-tRNA(Gln) amidotransferase subunit A (494 aa).

Catalysis depends on charge relay system residues K78 and S158. S182 acts as the Acyl-ester intermediate in catalysis.

This sequence belongs to the amidase family. GatA subfamily. As to quaternary structure, heterotrimer of A, B and C subunits.

It carries out the reaction L-glutamyl-tRNA(Gln) + L-glutamine + ATP + H2O = L-glutaminyl-tRNA(Gln) + L-glutamate + ADP + phosphate + H(+). Its function is as follows. Allows the formation of correctly charged Gln-tRNA(Gln) through the transamidation of misacylated Glu-tRNA(Gln) in organisms which lack glutaminyl-tRNA synthetase. The reaction takes place in the presence of glutamine and ATP through an activated gamma-phospho-Glu-tRNA(Gln). The polypeptide is Glutamyl-tRNA(Gln) amidotransferase subunit A (Xanthobacter autotrophicus (strain ATCC BAA-1158 / Py2)).